The sequence spans 508 residues: UTP--glucose-1-phosphate uridylyltransferase (508 aa).

Position 13 is a phosphoserine (S13). UTP-binding positions include 113-116 (LNGG), K127, Q190, and G222. Substrate is bound at residue 115–116 (GG). K127 contacts Mg(2+). Substrate-binding positions include H223 and 251–253 (NID). Positions 253 and 396 each coordinate UTP. D253 contacts Mg(2+). K396 is a catalytic residue. Position 426 is a phosphothreonine (T426). S434 carries the post-translational modification Phosphoserine. The residue at position 438 (K438) is an N6-acetyllysine. 2 positions are modified to phosphoserine: S448 and S461. Positions 457-508 (HLTVSGDVTFGKNVSLKGTVIIIANHGDRIDIPPGAVLENKIVSGNLRILDH) are oligomerization. Positions 502 to 503 (NL) are critical for end-to-end subunit interaction.

It belongs to the UDPGP type 1 family. Homooctamer.

It is found in the cytoplasm. It catalyses the reaction alpha-D-glucose 1-phosphate + UTP + H(+) = UDP-alpha-D-glucose + diphosphate. It participates in glycan biosynthesis; glycogen biosynthesis. Its function is as follows. UTP--glucose-1-phosphate uridylyltransferase catalyzing the conversion of glucose-1-phosphate into UDP-glucose, a crucial precursor for the production of glycogen. The sequence is that of UTP--glucose-1-phosphate uridylyltransferase (Ugp2) from Mus musculus (Mouse).